Consider the following 559-residue polypeptide: MSKVPSDIEIAQAAKMKPVMELARGLGIQEDEVELYGKYKAKISLDVYRRLKDKPDGKLILVTAITPTPAGEGKTTTSVGLTDALARLGKRVMVCLREPSLGPSFGIKGGAAGGGYAQVVPMEDINLHFTGDIHAVTYAHNLLAAMVDNHLQQGNVLNIDPRTITWRRVIDLNDRALRNIVIGLGGKANGVPRETGFDISVASEVMACLCLASDLMDLKERFSRIVVGYTYDGKPVTAGDLEAQGSMALLMKDAIKPNLVQTLENTPAFIHGGPFANIAHGCNSIIATKTALKLADYVVTEAGFGADLGAEKFYDVKCRYAGFKPDATVIVATVRALKMHGGVPKSDLATENLEALREGFANLEKHIENIGKFGVPAVVAINAFPTDTEAELNLLYELCAKAGAEVALSEVWAKGGEGGLELARKVLQTLESRPSNFHVLYNLDLSIKDKIAKIATEIYGADGVNYTAEADKAIQRYESLGYGNLPVVMAKTQYSFSDDMTKLGRPRNFTITVREVRLSAGAGFIVPITGAIMTMPGLPKRPAACNIDIDADGVITGLF.

68 to 75 (TPAGEGKT) is an ATP binding site.

Belongs to the formate--tetrahydrofolate ligase family.

It carries out the reaction (6S)-5,6,7,8-tetrahydrofolate + formate + ATP = (6R)-10-formyltetrahydrofolate + ADP + phosphate. The protein operates within one-carbon metabolism; tetrahydrofolate interconversion. This Moorella thermoacetica (strain ATCC 39073 / JCM 9320) protein is Formate--tetrahydrofolate ligase.